The following is a 606-amino-acid chain: MESGNIVNAQPKLSGIIDGSKSYMYEQLWKLCAGPLCDIPKLGENVYYFPQGNIELVQASTREELNELQPICDLPSKLQCRVIAIHLKVENNSDEIYAEITLMPDTTQVVIPTQSENRFRPLVNSFTKVLTASDTSAYGGFSVPKKHAIECLPPLDMSQPLPAQEILAIDLHDNQWRFRHNYRGTPQRHSLTTGWNEFITSKKLVKGDVIVFVRGETGELRVGIRRARHQQGNIPSSIVSIDCMRHGVIASAKHAFDNQCIFIVVYKPRSSQFIVSYDKFLDAVNNKFNVGSRFTMRFEGDDFSERRYFGTIIGVSDFSPHWKCSEWRSLEVQWDEFASFSRPNKVSPWEIEHLVPALNVPRSSLLKNKRLREVNEFGSSSSHLLPPILTQGQEIGQLSVASPMNISLRYRDTTEAAMNPSRLLMSYPVQPMPKLNYNNQMVTQIEENITTKAGTNFRLFGVTLDTPPMIKDPIKQIGSDISKLTERKKFGQSQTLRSPIEIQSKQFSSSRTCTKVQMQGVTIGRAVDLSVLNGYDQLILELEKLFDIKGQLQTRNQWKIAFTDSDGYEMLVGDDPWPEFCKMVKKILIYSKEEVKNLKSSKSLSS.

Positions 126-228 (FTKVLTASDT…ELRVGIRRAR (103 aa)) form a DNA-binding region, TF-B3. The region spanning 511–592 (RTCTKVQMQG…MVKKILIYSK (82 aa)) is the PB1 domain.

This sequence belongs to the ARF family. As to quaternary structure, homodimers and heterodimers.

The protein resides in the nucleus. In terms of biological role, auxin response factors (ARFs) are transcriptional factors that bind specifically to the DNA sequence 5'-TGTCTC-3' found in the auxin-responsive promoter elements (AuxREs). Could act as transcriptional activator or repressor. Formation of heterodimers with Aux/IAA proteins may alter their ability to modulate early auxin response genes expression. The sequence is that of Putative auxin response factor 21 (ARF21) from Arabidopsis thaliana (Mouse-ear cress).